Consider the following 293-residue polypeptide: Protoheme IX farnesyltransferase (293 aa).

9 helical membrane-spanning segments follow: residues 9–29, 38–58, 86–106, 111–131, 137–157, 167–187, 211–231, 234–254, and 271–291; these read LIKP…FLLA, YIIL…SCVL, FVKN…LFLG, LLTI…YSLW, IYST…GYCT, WLLF…ITIF, IHMI…TVLG, SYTF…TGWY, and ILSI…SIFI.

Belongs to the UbiA prenyltransferase family. Protoheme IX farnesyltransferase subfamily.

The protein resides in the cell inner membrane. It carries out the reaction heme b + (2E,6E)-farnesyl diphosphate + H2O = Fe(II)-heme o + diphosphate. It participates in porphyrin-containing compound metabolism; heme O biosynthesis; heme O from protoheme: step 1/1. Converts heme B (protoheme IX) to heme O by substitution of the vinyl group on carbon 2 of heme B porphyrin ring with a hydroxyethyl farnesyl side group. The chain is Protoheme IX farnesyltransferase from Blochmanniella floridana.